The following is a 104-amino-acid chain: Precursor of CEP11 (104 aa).

The first 27 residues, 1–27, serve as a signal peptide directing secretion; it reads MAKTRRVIYLFLTIVLLFCELIDEAQG. Positions 28 to 85 are excised as a propeptide; that stretch reads SRFRCHHSEDYSCKKRSSHHHHHHHHHQQQQHHHKDTPPEELQGSIKTRRSKDIYGLN. The interval 37–104 is disordered; it reads DYSCKKRSSH…SPGVGHLIKT (68 aa). Basic residues predominate over residues 41–62; that stretch reads KKRSSHHHHHHHHHQQQQHHHK. Hydroxyproline is present on residues Pro92 and Pro96. Residues 101–104 constitute a propeptide that is removed on maturation; that stretch reads LIKT.

Belongs to the C-terminally encoded plant signaling peptide (CEP) family. Interacts with CEP receptors (e.g. CEPR1 and CEPR2). In terms of processing, the mature small signaling peptide is generated by proteolytic processing of the longer precursor. Expressed in lateral root primordia and in lateral roots excluding the meristem region.

Its subcellular location is the secreted. It is found in the extracellular space. The protein localises to the apoplast. In terms of biological role, extracellular signaling peptide that may regulate primary root growth rate and systemic nitrogen (N)-demand signaling. Mediates up-regulation of genes involved in N uptake and assimilation pathways. This chain is Precursor of CEP11, found in Arabidopsis thaliana (Mouse-ear cress).